The sequence spans 662 residues: MAEAPQVVEIDPDFEPLPRPRSCTWPLPRPEFSQSNSATSSPAPSGGAAANPDAAAGLPSASAAAVNADFMSNLSLLEESEDFPQAPGSVAAAAAAAAAVAAAAAAAATGGLCGDFQGPEAGCLHPAPPQQPPPPGPLSQHPPVPPAAAGSLAGQPRKSSSSRRNAWGNLSYADLITKAIESSAEKRLTLSQIYEWMVKSVPYFKDKGDSNSSAGWKNSIRHNLSLHSKFIRVQNEGTGKSSWWMLNPEGGKSGKSPRRRAASMDNNSKFAKSRGRAAKKKASLQSGQEGAGDSPGSQFSKWPASPGSHSNDDFDNWSTFRPRTSSNASTISGRLSPIMTEQDDLGNGDVHSMVYPPSAAKMASTLPSLSEISNPENMENLLDNLNLLSSPTSLTVSTQSSPGTIMQQTPCYSFAPPNTSLNSPSPNYQKYTYGQSSMSPLPQMPMQTLQDSKSSYGGMAQYNCAAGLLKELLTSDSPPHNDIMTPVDPGVAQPNSRVLGQNVLMGPSSVMPAYGGQASHNKMMNPSSHSHPGHAQSTSAVNGRALPHAVNTMPHASGMNRLTQEKTALQVPLPHPMQMNALGGYSPASTCNGYGRMGLLHQEKLPSDLDGMFIERLDCDMESIIRNDLMDGDTLDFNFDNVLPNQSFPHSVKTTTHSWVSG.

Disordered regions lie at residues 1–62 (MAEA…PSAS) and 122–165 (GCLH…SRRN). Phosphothreonine; by PKB/AKT1 or PKB/AKT2 and SGK1 is present on Thr24. Low complexity predominate over residues 33–62 (SQSNSATSSPAPSGGAAANPDAAAGLPSAS). The span at 126–146 (PAPPQQPPPPGPLSQHPPVPP) shows a compositional bias: pro residues. Residues 167–261 (WGNLSYADLI…KSGKSPRRRA (95 aa)) constitute a DNA-binding region (fork-head). DNA-binding regions lie at residues 218–225 (NSIRHNLS) and 241–244 (SSWW). The residue at position 219 (Ser219) is a Phosphoserine; by STK4/MST1. 3 positions are modified to phosphoserine: Ser225, Ser241, and Ser242. The tract at residues 241–342 (SSWWMLNPEG…GRLSPIMTEQ (102 aa)) is disordered. An N6-acetyllysine mark is found at Lys252 and Lys255. Ser256 bears the Phosphoserine; by CDK1 mark. An omega-N-methylarginine; by PRMT1 mark is found at Arg258 and Arg260. A Nuclear localization signal motif is present at residues 258-260 (RRR). A Phosphoserine; by PKB/AKT1 and SGK1 modification is found at Ser263. Lys269, Lys272, and Lys281 each carry N6-acetyllysine. The segment covering 271-282 (AKSRGRAAKKKA) has biased composition (basic residues). The interval 290-570 (GAGDSPGSQF…RLTQEKTALQ (281 aa)) is sufficient for interaction with NLK. A phosphoserine mark is found at Ser294 and Ser305. A compositionally biased stretch (polar residues) spans 316-333 (NWSTFRPRTSSNASTISG). Residue Ser326 is modified to Phosphoserine; by PKB/AKT1. A Phosphoserine; by CK1 and SGK1 modification is found at Ser329. At Ser332 the chain carries Phosphoserine; by CK1. Ser336 carries the post-translational modification Phosphoserine; by DYRK1A. Thr340 carries the phosphothreonine modification. The interval 370 to 466 (SEISNPENME…GGMAQYNCAA (97 aa)) is required for interaction with RUNX2. Lys430 is modified (N6-acetyllysine). The Required for interaction with SIRT1 signature appears at 469–473 (LKELL).

As to quaternary structure, interacts with LRPPRC. Interacts with RUNX2; the interaction inhibits RUNX2 transcriptional activity and mediates the IGF1/insulin-dependent BGLAP expression in osteoblasts Interacts with PPP2R1A; the interaction regulates the dephosphorylation of FOXO1 at Thr-24 and Ser-263 leading to its nuclear import. Interacts with NLK. Interacts with SIRT1; the interaction results in the deacetylation of FOXO1 leading to activation of FOXO1-mediated transcription of genes involved in DNA repair and stress resistance. Binds to CDK1. Interacts with the 14-3-3 proteins, YWHAG and YWHAZ; the interactions require insulin-stimulated phosphorylation on Thr-24, promote nuclear exit and loss of transcriptional activity. Interacts with SKP2; the interaction ubiquitinates FOXO1 leading to its proteasomal degradation. The interaction requires the presence of KRIT1. Interacts (via the C-terminal half) with ATF4 (via its DNA binding domain); the interaction occurs in osteoblasts, regulates glucose homeostasis via suppression of beta-cell proliferation and subsequent decrease in insulin production. Interacts with PRMT1; the interaction methylates FOXO1, prevents PKB/AKT1 phosphorylation and retains FOXO1 in the nucleus. Interacts with EP300 and CREBBP; the interactions acetylate FOXO1. Interacts with SIRT2; the interaction is disrupted in response to oxidative stress or serum deprivation, leading to increased level of acetylated FOXO1, which promotes stress-induced autophagy by stimulating E1-like activating enzyme ATG7. Interacts (acetylated form) with ATG7; the interaction is increased in response to oxidative stress or serum deprivation and promotes the autophagic process leading to cell death. Interacts (acetylated form) with PPARG. Interacts with XBP1; this interaction is direct and leads to FOXO1 ubiquitination and degradation via the proteasome pathway. Interacts (via the Fork-head domain) with CEBPA; the interaction increases when FOXO1 is deacetylated. Interacts with WDFY2. Forms a complex with WDFY2 and AKT1. Interacts with CRY1. Interacts with PPIA/CYPA; the interaction promotes FOXO1 dephosphorylation, nuclear accumulation and transcriptional activity. Interacts with TOX4; FOXO1 is required for full induction of TOX4-dependent activity and the interaction is inhibited by insulin. Interacts (when phosphorylated on Ser-263) with STUB1/CHIP. In terms of processing, phosphorylation by NLK promotes nuclear export and inhibits the transcriptional activity. In response to growth factors, phosphorylation on Thr-24, Ser-263 and Ser-326 by PKB/AKT1 promotes nuclear export and inactivation of transactivational activity. Phosphorylation on Thr-24 is required for binding 14-3-3 proteins. Phosphorylation of Ser-263 decreases DNA-binding activity and promotes the phosphorylation of Thr-24 and Ser-326, permitting phosphorylation of Ser-329 and Ser-332, probably by CDK1, leading to nuclear exclusion and loss of function. Stress signals, such as response to oxygen or nitric oxide, attenuate the PKB/AKT1-mediated phosphorylation leading to nuclear retention. Phosphorylation of Ser-336 is independent of IGF1 and leads to reduced function. Dephosphorylated on Thr-24 and Ser-263 by PP2A in beta-cells under oxidative stress leading to nuclear retention. Phosphorylation of Ser-256 by CDK1 disrupts binding of 14-3-3 proteins leading to nuclear accumulation and has no effect on DNA binding nor transcriptional activity. Phosphorylation by STK4/MST1 on Ser-219, upon oxidative stress, inhibits binding to 14-3-3 proteins and nuclear export. PPIA/CYPA promotes its dephosphorylation on Ser-263. Post-translationally, ubiquitinated by SKP2. Ubiquitination leads to proteasomal degradation. Ubiquitinated by STUB1/CHIP; when Ser-263 is phosphorylated. Methylation inhibits AKT1-mediated phosphorylation at Ser-263 and is increased by oxidative stress. In terms of processing, acetylated. Acetylation at Lys-269 and Lys-281 are necessary for autophagic cell death induction. Deacetylated by SIRT2 in response to oxidative stress or serum deprivation, thereby negatively regulating FOXO1-mediated autophagic cell death. Once in the nucleus, acetylated by CREBBP/EP300. Acetylation diminishes the interaction with target DNA and attenuates the transcriptional activity. It increases the phosphorylation at Ser-263. Deacetylation by SIRT1 results in reactivation of the transcriptional activity. Oxidative stress by hydrogen peroxide treatment appears to promote deacetylation and uncoupling of insulin-induced phosphorylation. By contrast, resveratrol acts independently of acetylation. Acetylated at Lys-430, promoting its localization to the nucleus and transcription factor activity. Deacetylation at Lys-430 by SIRT6, promotes its translocation into the cytoplasm, preventing its transcription factor activity. Deacetylation and subsequent inhibition by SIRT6 has different effects depending on cell types: it inhibits gluconeogenesis in hepatocytes, promotes glucose sensing in pancreatic beta-cells and regulates lipid catabolism in brown adipocytes. As to expression, highly in subcutaneous adipose and visceral adipose tissues. Levels higher in piglets than in adults. Also expressed at lower levels in liver and muscle.

Its subcellular location is the cytoplasm. The protein resides in the nucleus. Its function is as follows. Transcription factor that is the main target of insulin signaling and regulates metabolic homeostasis in response to oxidative stress. Binds to the insulin response element (IRE) with consensus sequence 5'-TT[G/A]TTTTG-3' and the related Daf-16 family binding element (DBE) with consensus sequence 5'-TT[G/A]TTTAC-3'. Activity suppressed by insulin. Main regulator of redox balance and osteoblast numbers and controls bone mass. Orchestrates the endocrine function of the skeleton in regulating glucose metabolism. Also acts as a key regulator of chondrogenic commitment of skeletal progenitor cells in response to lipid availability: when lipids levels are low, translocates to the nucleus and promotes expression of SOX9, which induces chondrogenic commitment and suppresses fatty acid oxidation. Acts synergistically with ATF4 to suppress osteocalcin/BGLAP activity, increasing glucose levels and triggering glucose intolerance and insulin insensitivity. Also suppresses the transcriptional activity of RUNX2, an upstream activator of osteocalcin/BGLAP. Acts as an inhibitor of glucose sensing in pancreatic beta cells by acting as a transcription repressor and suppressing expression of PDX1. In hepatocytes, promotes gluconeogenesis by acting together with PPARGC1A and CEBPA to activate the expression of genes such as IGFBP1, G6PC1 and PCK1. Also promotes gluconeogenesis by directly promoting expression of PPARGC1A and G6PC1. Important regulator of cell death acting downstream of CDK1, PKB/AKT1 and STK4/MST1. Promotes neural cell death. Mediates insulin action on adipose tissue. Regulates the expression of adipogenic genes such as PPARG during preadipocyte differentiation and, adipocyte size and adipose tissue-specific gene expression in response to excessive calorie intake. Regulates the transcriptional activity of GADD45A and repair of nitric oxide-damaged DNA in beta-cells. Required for the autophagic cell death induction in response to starvation or oxidative stress in a transcription-independent manner. Mediates the function of MLIP in cardiomyocytes hypertrophy and cardiac remodeling. Positive regulator of apoptosis in cardiac smooth muscle cells as a result of its transcriptional activation of pro-apoptotic genes. Regulates endothelial cell (EC) viability and apoptosis in a PPIA/CYPA-dependent manner via transcription of CCL2 and BCL2L11 which are involved in EC chemotaxis and apoptosis. This Sus scrofa (Pig) protein is Forkhead box protein O1 (FOXO1).